A 148-amino-acid polypeptide reads, in one-letter code: Pseudoazurin (148 aa).

An N-terminal signal peptide occupies residues 1-25; the sequence is MMIFRALIAAATLAIAIATTLPAAA. The region spanning 30–118 is the Plastocyanin-like domain; it reads VKMLNSGPGG…MGMVALVVVG (89 aa). Cu cation is bound by residues His-65, Cys-103, His-106, and Met-111.

The cofactor is Cu cation.

Its subcellular location is the periplasm. This Methylorubrum extorquens (strain ATCC 14718 / DSM 1338 / JCM 2805 / NCIMB 9133 / AM1) (Methylobacterium extorquens) protein is Pseudoazurin.